A 371-amino-acid chain; its full sequence is Antibiotic efflux pump periplasmic linker protein ArpA (371 aa).

The first 22 residues, 1–22 (MQFKPAVTALVSAVALATLLSG), serve as a signal peptide directing secretion. Cys-23 is lipidated: N-palmitoyl cysteine. Cys-23 carries the S-diacylglycerol cysteine lipid modification. A coiled-coil region spans residues 115 to 155 (LAERYKQLIDEQAVSKQEYDDANAKRLQAEASLKSAQIDLR).

The protein belongs to the membrane fusion protein (MFP) (TC 8.A.1) family.

It localises to the cell inner membrane. The periplasmic linker protein component of an antibiotic efflux pump. Confers resistance to numerous structurally unrelated antibiotics such as carbenicillin, chloramphenicol, erythromycin, novobiocin, streptomycin and tetracycline. Is not involved in organic solvent efflux. The chain is Antibiotic efflux pump periplasmic linker protein ArpA (arpA) from Pseudomonas putida (Arthrobacter siderocapsulatus).